Reading from the N-terminus, the 739-residue chain is Xylosyl- and glucuronyltransferase LARGE2s (739 aa).

Over 1-10 (MLCSWRVKLK) the chain is Cytoplasmic. A helical; Signal-anchor for type II membrane protein transmembrane segment spans residues 11 to 31 (LLLATITLAVLLSWLYLFVGS). Residues 32–739 (LEYGRFLLLP…LKYLTAERNL (708 aa)) are Lumenal-facing. The disordered stretch occupies residues 80–105 (AEGSDGNPQWAASAEDGPPLGGERNN). 3 N-linked (GlcNAc...) asparagine glycosylation sites follow: N105, N131, and N217. A xylosyltransferase activity region spans residues 121–396 (LHVAIVCAGH…FLEYDGNLLR (276 aa)). The Mn(2+) site is built by D225 and D227. An N-linked (GlcNAc...) asparagine glycan is attached at N255. Positions 397–739 (RELFGCASLP…LKYLTAERNL (343 aa)) are glucuronyltransferase activity. Positions 546 and 548 each coordinate Mn(2+).

The protein in the C-terminal section; belongs to the glycosyltransferase 49 family. In the N-terminal section; belongs to the glycosyltransferase 8 family. Requires Mn(2+) as cofactor.

The protein resides in the golgi apparatus membrane. It catalyses the reaction 3-O-[beta-D-GlcA-(1-&gt;3)-beta-D-Xyl-(1-&gt;4)-Rib-ol-P-Rib-ol-P-3-beta-D-GalNAc-(1-&gt;3)-beta-D-GlcNAc-(1-&gt;4)-(O-6-P-alpha-D-Man)]-Thr-[protein] + UDP-alpha-D-xylose = 3-O-[alpha-D-Xyl-(1-&gt;3)-beta-D-GlcA-(1-&gt;4)-beta-D-Xyl-(1-&gt;4)-Rib-ol-P-Rib-ol-P-3-beta-D-GalNAc-(1-&gt;3)-beta-D-GlcNAc-(1-&gt;4)-(O-6-P-alpha-D-Man)]-Thr-[protein] + UDP + H(+). The catalysed reaction is 3-O-{(1-&gt;[3)-alpha-D-Xyl-(1-&gt;3)-beta-D-GlcA-(1-&gt;](n)-4)-beta-D-Xyl-(1-&gt;4)-Rib-ol-P-Rib-ol-P-3-beta-D-GalNAc-(1-&gt;3)-beta-D-GlcNAc-(1-&gt;4)-O-6-P-alpha-D-Man}-L-Thr-[protein] + UDP-alpha-D-glucuronate = 3-O-{beta-D-GlcA-(1-&gt;[3)-alpha-D-Xyl-(1-&gt;3)-beta-D-GlcA-(1-&gt;](n)-4)-beta-D-Xyl-(1-&gt;4)-Rib-ol-P-Rib-ol-P-3-beta-D-GalNAc-(1-&gt;3)-beta-D-GlcNAc-(1-&gt;4)-O-6-P-alpha-D-Man}-L-Thr-[protein] + UDP + H(+). It carries out the reaction 3-O-{beta-D-GlcA-(1-&gt;[3)-alpha-D-Xyl-(1-&gt;3)-beta-D-GlcA-(1-&gt;](n)-4)-beta-D-Xyl-(1-&gt;4)-Rib-ol-P-Rib-ol-P-3-beta-D-GalNAc-(1-&gt;3)-beta-D-GlcNAc-(1-&gt;4)-O-6-P-alpha-D-Man}-L-Thr-[protein] + UDP-alpha-D-xylose = 3-O-{(1-&gt;[3)-alpha-D-Xyl-(1-&gt;3)-beta-D-GlcA-(1-&gt;](n+1)-4)-beta-D-Xyl-(1-&gt;4)-Rib-ol-P-Rib-ol-P-3-beta-D-GalNAc-(1-&gt;3)-beta-D-GlcNAc-(1-&gt;4)-O-6-P-alpha-D-Man}-L-Thr-[protein] + UDP + H(+). It participates in protein modification; protein glycosylation. Functionally, bifunctional glycosyltransferase with both alpha-1,3-xylosyltransferase and beta-1,3-glucuronyltransferase activities involved in the maturation of alpha-dystroglycan (DAG1) by glycosylation leading to DAG1 binding to laminin G-like domain-containing extracellular proteins with high affinity and in a phosphorylated-O-mannosyl trisaccharide dependent manner. Elongates the glucuronyl-beta-1,4-xylose-beta disaccharide primer structure by adding repeating units [-3-Xylose-alpha-1,3-GlcA-beta-1-] to produce a heteropolysaccharide. Supports the maturation of DAG1 more effectively than LARGE1. In addition, can modify both heparan sulfate (HS)- and chondroitin/dermatan sulfate (CS/DS)-proteoglycans (PGs), namely GPC4, with a glycosaminoglycan (GAG)-like polysaccharide composed of xylose and glucuronic acid to confer laminin binding. The sequence is that of Xylosyl- and glucuronyltransferase LARGE2s from Gallus gallus (Chicken).